The following is a 591-amino-acid chain: DDB1- and CUL4-associated factor 8 (591 aa).

Residues 1 to 25 (MSNKRPNTTDGRTDLANGSLSSSPE) are compositionally biased toward polar residues. A disordered region spans residues 1–140 (MSNKRPNTTD…EDWVSSETTA (140 aa)). Phosphoserine occurs at positions 22 and 23. Positions 40–51 (IEVEASDLSLSL) match the Nuclear export signal motif. Composition is skewed to basic and acidic residues over residues 66–100 (RGTDTESSGEEKDSDSMEDTGHYSINDESRGHGHS) and 118–131 (SRDQDSSDDERALE). Phosphoserine is present on residues serine 100, serine 123, and serine 124. WD repeat units follow at residues 185 to 224 (GHTGCVNTLHFNQRGTWLASGSDDLKVVVWDWVRRQPVLD), 228 to 269 (GHKS…CCKN), 275 to 315 (QHKG…PASK), 323 to 363 (EKKV…ENEN), 379 to 418 (ESKANITCLVYSHDGTELLASYNDEDIYLFNSSHSDGAQY), 426 to 466 (RNNA…IIQF), and 470 to 509 (DKGGVVNCLEPHPHLPVLATSGLDHDVKIWAPTAEASTEL). Omega-N-methylarginine; by PRMT1 is present on arginine 198. The segment at 552–591 (HRRWREPGVGATDADSDESPSSSDTSDEEEGPDRVQCMPS) is disordered.

This sequence belongs to the WD repeat DCAF8 family. Interacts with DDB1, CUL4A and CUL4B. Interacts with KPNA1, KPNB1 and XPO1. Expressed in the brain.

The protein resides in the nucleus. The protein localises to the cytoplasm. It participates in protein modification; protein ubiquitination. In terms of biological role, may function as a substrate receptor for CUL4-DDB1 E3 ubiquitin-protein ligase complex. The sequence is that of DDB1- and CUL4-associated factor 8 (Dcaf8) from Mus musculus (Mouse).